The chain runs to 473 residues: Glutamate--tRNA ligase (473 aa).

Positions 11-21 (PSPTGFLHIGG) match the 'HIGH' region motif. The 'KMSKS' region motif lies at 240–244 (KLSKR). Lysine 243 contributes to the ATP binding site.

The protein belongs to the class-I aminoacyl-tRNA synthetase family. Glutamate--tRNA ligase type 1 subfamily. As to quaternary structure, monomer.

The protein resides in the cytoplasm. The enzyme catalyses tRNA(Glu) + L-glutamate + ATP = L-glutamyl-tRNA(Glu) + AMP + diphosphate. In terms of biological role, catalyzes the attachment of glutamate to tRNA(Glu) in a two-step reaction: glutamate is first activated by ATP to form Glu-AMP and then transferred to the acceptor end of tRNA(Glu). The chain is Glutamate--tRNA ligase from Rhodopseudomonas palustris (strain ATCC BAA-98 / CGA009).